We begin with the raw amino-acid sequence, 354 residues long: uncharacterized protein (354 aa).

A run of 9 helical transmembrane segments spans residues 9-29 (MGKIELHHVFVMLSCIYLIFS), 31-51 (ISINSAVVFLFSSIFFYISFT), 76-96 (NFGIFLMIVGLIAVTSDLIWV), 109-129 (FLNVYFTTLSHLFLVGWAIVV), 144-164 (IIFSILIMLLGYRTNVLVLLI), 185-205 (GILVFVILLGLSILRLYALGV), 278-298 (YGTLAIIPYFGILGIFLGFFY), 306-326 (GIYLGIYGILFAYTLIGIESG), and 327-347 (ILDIDVILYYFFGLILCIYAI).

It is found in the cell membrane. This is an uncharacterized protein from Methanocaldococcus jannaschii (strain ATCC 43067 / DSM 2661 / JAL-1 / JCM 10045 / NBRC 100440) (Methanococcus jannaschii).